The following is a 150-amino-acid chain: Transcription antitermination protein NusB (150 aa).

The protein belongs to the NusB family.

Involved in transcription antitermination. Required for transcription of ribosomal RNA (rRNA) genes. Binds specifically to the boxA antiterminator sequence of the ribosomal RNA (rrn) operons. The sequence is that of Transcription antitermination protein NusB from Alcanivorax borkumensis (strain ATCC 700651 / DSM 11573 / NCIMB 13689 / SK2).